The primary structure comprises 470 residues: Putative bifunctional phosphatase/peptidyl-prolyl cis-trans isomerase (470 aa).

Catalysis depends on Asp-22, which acts as the Nucleophile. Mg(2+)-binding residues include Asp-22, Asp-24, and Asp-221. The PPIase cyclophilin-type domain maps to 286-468; it reads TGPKVTIKTN…EDVIIETIEV (183 aa).

In the C-terminal section; belongs to the cyclophilin-type PPIase family. PPIL1 subfamily. Mg(2+) is required as a cofactor.

It catalyses the reaction [protein]-peptidylproline (omega=180) = [protein]-peptidylproline (omega=0). Its function is as follows. PPIases accelerate the folding of proteins. It catalyzes the cis-trans isomerization of proline imidic peptide bonds in oligopeptides. This is Putative bifunctional phosphatase/peptidyl-prolyl cis-trans isomerase from Streptococcus pyogenes serotype M6 (strain ATCC BAA-946 / MGAS10394).